Here is a 506-residue protein sequence, read N- to C-terminus: bZIP transcription factor TGA10 (506 aa).

2 disordered regions span residues Val22–His50 and Pro113–Arg218. 4 stretches are compositionally biased toward polar residues: residues Met25 to Gly45, Pro113 to Gly124, Pro142 to Leu152, and Ser160 to Pro180. Basic and acidic residues predominate over residues Asp207–Thr216. In terms of domain architecture, bZIP spans Asp213–Arg257. Residues Lys215–Lys235 form a basic motif region. Positions Leu217 to Arg224 match the Nuclear localization signal motif. The interval Leu241 to Leu255 is leucine-zipper. One can recognise a DOG1 domain in the interval Ala288–Arg502.

This sequence belongs to the bZIP family. Binds DNA as a dimer. Interacts with TGA2.2. In terms of tissue distribution, specifically expressed in roots.

The protein resides in the nucleus. Transcription activator that binds to as1-like elements (5'-TGACGTAAgggaTGACGCA-3') in promoters of target genes. Regulates transcription in response to plant signaling molecules salicylic acid (SA), methyl jasmonate (MJ) and auxin (2,4D) only in leaves. Prevents lateral branching and may repress defense signaling. In Nicotiana tabacum (Common tobacco), this protein is bZIP transcription factor TGA10.